Consider the following 441-residue polypeptide: 4-alpha-glucanotransferase (441 aa).

5 residues coordinate Ca(2+): D13, N15, D17, V19, and D21. The active-site Nucleophile is the D186. E216 functions as the Proton donor in the catalytic mechanism.

The protein belongs to the glycosyl hydrolase 13 family. In terms of assembly, monomer. Ca(2+) serves as cofactor.

Its subcellular location is the cytoplasm. The catalysed reaction is Transfers a segment of a (1-&gt;4)-alpha-D-glucan to a new position in an acceptor, which may be glucose or a (1-&gt;4)-alpha-D-glucan.. The polypeptide is 4-alpha-glucanotransferase (mgtA) (Thermotoga maritima (strain ATCC 43589 / DSM 3109 / JCM 10099 / NBRC 100826 / MSB8)).